Here is a 225-residue protein sequence, read N- to C-terminus: Cytidylate kinase (225 aa).

12-20 (GPSGAGKGT) contributes to the ATP binding site.

This sequence belongs to the cytidylate kinase family. Type 1 subfamily.

It is found in the cytoplasm. It carries out the reaction CMP + ATP = CDP + ADP. The catalysed reaction is dCMP + ATP = dCDP + ADP. The chain is Cytidylate kinase from Proteus mirabilis (strain HI4320).